The chain runs to 333 residues: Transcription initiation factor IIB (333 aa).

The TFIIB-type zinc finger occupies 33–64; that stretch reads EIYRCPICGNDRFVYNYERGEVVCIVCGAVVQ. Residues cysteine 37, cysteine 40, cysteine 56, and cysteine 59 each coordinate Zn(2+). A run of 2 repeats spans residues 149 to 232 and 243 to 324.

Belongs to the TFIIB family.

Stabilizes TBP binding to an archaeal box-A promoter. Also responsible for recruiting RNA polymerase II to the pre-initiation complex (DNA-TBP-TFIIB). The chain is Transcription initiation factor IIB from Pyrobaculum arsenaticum (strain DSM 13514 / JCM 11321 / PZ6).